The chain runs to 265 residues: tRNA pseudouridine synthase A (265 aa).

Residue aspartate 52 is the Nucleophile of the active site. Tyrosine 110 provides a ligand contact to substrate. A disordered region spans residues 244–265 (FYRDGPPARTPGGTTDAEEDEG).

It belongs to the tRNA pseudouridine synthase TruA family. Homodimer.

It catalyses the reaction uridine(38/39/40) in tRNA = pseudouridine(38/39/40) in tRNA. Formation of pseudouridine at positions 38, 39 and 40 in the anticodon stem and loop of transfer RNAs. This is tRNA pseudouridine synthase A from Myxococcus xanthus.